The chain runs to 349 residues: MIVNRYKDAGVDVNAGYELVRRIKGAVASTKRPGYVGNIGGFGGLFDLDSLGYDHPVLVSGTDGVGTKLIIAQKMDKNDTVGIDVVAMCVNDVLAQGAEPLFFLDYIACGHNDPALLASVVQGVAEGCKQAGASLIGGETAEMPDMYAPDEYDLAGFTVGVAEKDRLLSVDTPQAGDVLLGLASSGVHSNGFSLVRKILFKDHDVKLTDKPAELKGKSVGESLLAPTRIYIKSVLPLIKQGLVHGVAHITGGGLIENVPRMFNDGLRAEIAAGSWEVPDIFNYLKQVGNLSDDDCWQTFNMGLGMILAVPADKKEEAKKLLLASGEKVFEVGHLSERTDGEKIFIKLVE.

It belongs to the AIR synthase family.

Its subcellular location is the cytoplasm. The catalysed reaction is 2-formamido-N(1)-(5-O-phospho-beta-D-ribosyl)acetamidine + ATP = 5-amino-1-(5-phospho-beta-D-ribosyl)imidazole + ADP + phosphate + H(+). The protein operates within purine metabolism; IMP biosynthesis via de novo pathway; 5-amino-1-(5-phospho-D-ribosyl)imidazole from N(2)-formyl-N(1)-(5-phospho-D-ribosyl)glycinamide: step 2/2. The protein is Phosphoribosylformylglycinamidine cyclo-ligase of Lactobacillus delbrueckii subsp. bulgaricus (strain ATCC 11842 / DSM 20081 / BCRC 10696 / JCM 1002 / NBRC 13953 / NCIMB 11778 / NCTC 12712 / WDCM 00102 / Lb 14).